The chain runs to 239 residues: MSVAWLTQQLSTHGIELSDKQQQQFQTYYQMLVEWNEKMNLTSITEEHEVYLKHFYDSIATSFYTDLTKELTICDVGAGAGFPSIPLKIIFPNLKVTIVDSLNKRIHFLNQLAEALELDNVSFVHDRAETYGKGDYRASYDIVTARAVARLSVLSELCLPLVKKGGHFIALKSSKGEEELEEARFGIGVLGGKVLDTISYELPEDAGERQMIIIDKRSQTPKKYPRKPGTPNKSPLLEK.

Residues Gly77, Phe82, 128 to 129 (AE), and Arg146 each bind S-adenosyl-L-methionine. Residues 215 to 239 (DKRSQTPKKYPRKPGTPNKSPLLEK) form a disordered region.

This sequence belongs to the methyltransferase superfamily. RNA methyltransferase RsmG family.

Its subcellular location is the cytoplasm. Its function is as follows. Specifically methylates the N7 position of guanine in position 535 of 16S rRNA. This Staphylococcus saprophyticus subsp. saprophyticus (strain ATCC 15305 / DSM 20229 / NCIMB 8711 / NCTC 7292 / S-41) protein is Ribosomal RNA small subunit methyltransferase G.